Consider the following 641-residue polypeptide: ATP-dependent DNA helicase PIF1 (641 aa).

The PINT stretch occupies residues 1 to 180; it reads MLSGIEAAAG…LVKRPVEPQA (180 aa). S27 and S151 each carry phosphoserine. The interval 167–641 is hydrolyzes ATP in the presence of both magnesium and single-stranded DNA; weak activity in the presence of RNA or double-stranded DNA; No unwinding activity; the sequence is PDTTLVKRPV…SDQENMDPIL (475 aa). A disordered region spans residues 173-192; it reads KRPVEPQAGAEPSTEAPRWP. 228 to 235 contributes to the ATP binding site; it reads GSAGTGKS. A DNA-binding region spans residues 577 to 596; the sequence is QAYVALSRARSLQGLRVLDF. Residues 622–641 are disordered; that stretch reads LESPDDDEAASDQENMDPIL. Residues 624–641 show a composition bias toward acidic residues; it reads SPDDDEAASDQENMDPIL.

The protein belongs to the helicase family. PIF1 subfamily. Monomer. Interacts with telomerase. It depends on Mg(2+) as a cofactor. In terms of tissue distribution, weak ubiquitous expression.

The protein localises to the nucleus. It localises to the mitochondrion. The enzyme catalyses Couples ATP hydrolysis with the unwinding of duplex DNA at the replication fork by translocating in the 5'-3' direction. This creates two antiparallel DNA single strands (ssDNA). The leading ssDNA polymer is the template for DNA polymerase III holoenzyme which synthesizes a continuous strand.. The catalysed reaction is ATP + H2O = ADP + phosphate + H(+). DNA-dependent ATPase and 5'-3' DNA helicase required for the maintenance of both mitochondrial and nuclear genome stability. Efficiently unwinds G-quadruplex (G4) DNA structures and forked RNA-DNA hybrids. Resolves G4 structures, preventing replication pausing and double-strand breaks (DSBs) at G4 motifs. Involved in the maintenance of telomeric DNA. Inhibits telomere elongation, de novo telomere formation and telomere addition to DSBs via catalytic inhibition of telomerase. Reduces the processivity of telomerase by displacing active telomerase from DNA ends. Releases telomerase by unwinding the short telomerase RNA/telomeric DNA hybrid that is the intermediate in the telomerase reaction. Possesses an intrinsic strand annealing activity. The polypeptide is ATP-dependent DNA helicase PIF1 (Homo sapiens (Human)).